Here is a 424-residue protein sequence, read N- to C-terminus: Gamma-glutamyl phosphate reductase (424 aa).

The segment at 1 to 27 (MSVEAQSRSGAVDTQEPADLREQVHSA) is disordered.

It belongs to the gamma-glutamyl phosphate reductase family.

It is found in the cytoplasm. The catalysed reaction is L-glutamate 5-semialdehyde + phosphate + NADP(+) = L-glutamyl 5-phosphate + NADPH + H(+). It participates in amino-acid biosynthesis; L-proline biosynthesis; L-glutamate 5-semialdehyde from L-glutamate: step 2/2. Functionally, catalyzes the NADPH-dependent reduction of L-glutamate 5-phosphate into L-glutamate 5-semialdehyde and phosphate. The product spontaneously undergoes cyclization to form 1-pyrroline-5-carboxylate. The polypeptide is Gamma-glutamyl phosphate reductase (Mycolicibacterium smegmatis (strain ATCC 700084 / mc(2)155) (Mycobacterium smegmatis)).